The chain runs to 123 residues: cAMP-responsive element-binding protein-like 2 (123 aa).

Residues 1-24 (MDDSKVVGGKVKKPGKRGRKPAKI) form a disordered region. The segment covering 10–21 (KVKKPGKRGRKP) has biased composition (basic residues). Residues 23–86 (KIDLKAKLER…MAMDQGKIPS (64 aa)) enclose the bZIP domain. The segment at 29 to 60 (KLERSRQSARECRARKKLRYQYLEELVSSRER) is basic motif. Residues 62–69 (ICALREEL) are leucine-zipper. Residues 93–123 (TGEEQNKSQQNSSRHPKAGKTDANTNSLVGN) form a disordered region. The span at 114–123 (DANTNSLVGN) shows a compositional bias: polar residues.

The protein belongs to the bZIP family. ATF subfamily. As to quaternary structure, interacts with CREB1; regulates CREB1 phosphorylation, stability and transcriptional activity. Post-translationally, phosphorylated by AMPK.

The protein localises to the nucleus. Functionally, probable regulator of CREB1 transcriptional activity which is involved in adipose cells differentiation. May also play a regulatory role in the cell cycle. The chain is cAMP-responsive element-binding protein-like 2 (Crebl2) from Rattus norvegicus (Rat).